The following is a 337-amino-acid chain: 1-aminocyclopropane-1-carboxylate deaminase (337 aa).

Lys-50 carries the post-translational modification N6-(pyridoxal phosphate)lysine. Ser-77 (nucleophile) is an active-site residue.

Belongs to the ACC deaminase/D-cysteine desulfhydrase family. In terms of assembly, homotrimer. Pyridoxal 5'-phosphate is required as a cofactor.

The catalysed reaction is 1-aminocyclopropane-1-carboxylate + H2O = 2-oxobutanoate + NH4(+). In terms of biological role, catalyzes a cyclopropane ring-opening reaction, the irreversible conversion of 1-aminocyclopropane-1-carboxylate (ACC) to ammonia and alpha-ketobutyrate. Allows growth on ACC as a nitrogen source. This chain is 1-aminocyclopropane-1-carboxylate deaminase, found in Methylobacterium sp. (strain 4-46).